The primary structure comprises 1812 residues: Replicase large subunit (1812 aa).

The segment at 58 to 820 (KRNLNEDQIQ…WAQMVEDSEV (763 aa)) is methyltransferase. Residues 79 to 306 (VTSSVHRGTH…HNLNSLMLYV (228 aa)) form the Alphavirus-like MT domain. A coiled-coil region spans residues 543-573 (SELDEKVSLYEEYERERQRISDEIVSEKIGL). The interval 701 to 738 (QVEQDWPIGNLPDVDPDDSASAQVCLTESASTSSDEDC) is disordered. The span at 720–733 (ASAQVCLTESASTS) shows a compositional bias: polar residues. The (+)RNA virus helicase ATP-binding domain occupies 979 to 1140 (CDITFLMNEI…KLEIDNVVEK (162 aa)). Positions 1010 to 1272 (TLVDGVPGCG…RHRRSLVYYT (263 aa)) are helicase. 1014–1021 (GVPGCGKS) is a binding site for ATP. Residues 1141-1303 (RLTYRSPLDV…MKHLHEEGVK (163 aa)) enclose the (+)RNA virus helicase C-terminal domain. The region spanning 1565–1678 (HESVEIDFSK…FFPKGMVIED (114 aa)) is the RdRp catalytic domain.

It belongs to the ssRNA positive-strand viruses RNA-directed RNA polymerase family. In terms of assembly, heterodimer of a large and a small subunit.

The enzyme catalyses RNA(n) + a ribonucleoside 5'-triphosphate = RNA(n+1) + diphosphate. The catalysed reaction is ATP + H2O = ADP + phosphate + H(+). Is an RNA-dependent RNA polymerase active in viral RNA replication. In terms of biological role, is a methyltransferase active in RNA capping and an RNA helicase. Methyltransferase displays a cytoplasmic capping enzyme activity. This function is necessary since all viral RNAs are synthesized in the cytoplasm, and host capping enzymes are restricted to the nucleus. Helicase region probably exhibits NTPase and RNA unwinding activities (Potential). This Potato mop-top virus (isolate Potato/Sweden/Sw) (PMTV) protein is Replicase large subunit (rep).